A 280-amino-acid chain; its full sequence is Probable cell division protein WhiA (280 aa).

The segment at residues 246-279 is a DNA-binding region (H-T-H motif); it reads SLEQIAQFFERKYKVQITRSGIQHLNAKLKKLNQ.

This sequence belongs to the WhiA family.

Its function is as follows. Involved in cell division and chromosome segregation. This is Probable cell division protein WhiA from Mycoplasma pneumoniae (strain ATCC 29342 / M129 / Subtype 1) (Mycoplasmoides pneumoniae).